The primary structure comprises 196 residues: Molybdenum cofactor guanylyltransferase (196 aa).

GTP-binding positions include 10-12 (LAG), lysine 23, asparagine 51, aspartate 69, and aspartate 99. Residue aspartate 99 participates in Mg(2+) binding.

It belongs to the MobA family. As to quaternary structure, monomer. Requires Mg(2+) as cofactor.

The protein localises to the cytoplasm. It carries out the reaction Mo-molybdopterin + GTP + H(+) = Mo-molybdopterin guanine dinucleotide + diphosphate. Its function is as follows. Transfers a GMP moiety from GTP to Mo-molybdopterin (Mo-MPT) cofactor (Moco or molybdenum cofactor) to form Mo-molybdopterin guanine dinucleotide (Mo-MGD) cofactor. The chain is Molybdenum cofactor guanylyltransferase from Shewanella sediminis (strain HAW-EB3).